Reading from the N-terminus, the 121-residue chain is MARIAGVDIPRDKRVVISLTYVFGIGRTTAEKILAEAGISEETRVRDLTEDELGRIRDIIDRIKVEGDLRREVSLNIKRLMEIGSYRGLRHRRGLPVRGQNSKNNARTRKGPRRTVANKKK.

The segment at 91–121 (HRRGLPVRGQNSKNNARTRKGPRRTVANKKK) is disordered. Over residues 106–121 (ARTRKGPRRTVANKKK) the composition is skewed to basic residues.

Belongs to the universal ribosomal protein uS13 family. In terms of assembly, part of the 30S ribosomal subunit. Forms a loose heterodimer with protein S19. Forms two bridges to the 50S subunit in the 70S ribosome.

In terms of biological role, located at the top of the head of the 30S subunit, it contacts several helices of the 16S rRNA. In the 70S ribosome it contacts the 23S rRNA (bridge B1a) and protein L5 of the 50S subunit (bridge B1b), connecting the 2 subunits; these bridges are implicated in subunit movement. Contacts the tRNAs in the A and P-sites. This chain is Small ribosomal subunit protein uS13, found in Bacillus cereus (strain ZK / E33L).